A 784-amino-acid polypeptide reads, in one-letter code: Serine/threonine-protein kinase DCLK2 (784 aa).

The segment at M1–I45 is disordered. The segment covering I7–P19 has biased composition (basic and acidic residues). Positions R24–P39 are enriched in low complexity. T61 bears the Phosphothreonine mark. 2 consecutive Doublecortin domains span residues K72–T158 and K197–D280. Composition is skewed to low complexity over residues A300 to S312 and T341 to S364. The disordered stretch occupies residues A300–L368. S379 is subject to Phosphoserine. Positions Y411–V668 constitute a Protein kinase domain. ATP contacts are provided by residues I417–V425 and K440. D532 functions as the Proton acceptor in the catalytic mechanism. At S664 the chain carries Phosphoserine. Position 683 is a phosphothreonine (T683). The disordered stretch occupies residues C724–D784. The segment covering S741–P758 has biased composition (low complexity).

It belongs to the protein kinase superfamily. CAMK Ser/Thr protein kinase family. CaMK subfamily. In terms of assembly, binds to and stabilizes microtubules. Interacts with MAPK8IP1/JIP-1, MAPK8IP2/JIP-2, MAPK9/JNK2, PPP1R9B/NEURABIN-2 and actin. Post-translationally, autophosphorylated.

It localises to the cytoplasm. The protein resides in the cytoskeleton. The catalysed reaction is L-seryl-[protein] + ATP = O-phospho-L-seryl-[protein] + ADP + H(+). It carries out the reaction L-threonyl-[protein] + ATP = O-phospho-L-threonyl-[protein] + ADP + H(+). Functionally, protein kinase with a significantly reduced Ca(2+)/CAM affinity and dependence compared to other members of the CaMK family. May play a role in the down-regulation of CRE-dependent gene activation probably by phosphorylation of the CREB coactivator CRTC2/TORC2 and the resulting retention of TORC2 in the cytoplasm. This is Serine/threonine-protein kinase DCLK2 (DCLK2) from Ailuropoda melanoleuca (Giant panda).